The following is a 208-amino-acid chain: Thymidylate kinase (208 aa).

10–17 is a binding site for ATP; it reads GPEGSGKT.

The protein belongs to the thymidylate kinase family.

It catalyses the reaction dTMP + ATP = dTDP + ADP. In terms of biological role, phosphorylation of dTMP to form dTDP in both de novo and salvage pathways of dTTP synthesis. The chain is Thymidylate kinase from Bacillus cereus (strain B4264).